The following is a 100-amino-acid chain: Urease subunit gamma (100 aa).

The protein belongs to the urease gamma subunit family. As to quaternary structure, heterotrimer of UreA (gamma), UreB (beta) and UreC (alpha) subunits. Three heterotrimers associate to form the active enzyme.

Its subcellular location is the cytoplasm. The enzyme catalyses urea + 2 H2O + H(+) = hydrogencarbonate + 2 NH4(+). The protein operates within nitrogen metabolism; urea degradation; CO(2) and NH(3) from urea (urease route): step 1/1. The sequence is that of Urease subunit gamma from Nitrosococcus oceani (strain ATCC 19707 / BCRC 17464 / JCM 30415 / NCIMB 11848 / C-107).